A 172-amino-acid chain; its full sequence is Large ribosomal subunit protein bL21m (172 aa).

A mitochondrion-targeting transit peptide spans 1–20; it reads MIRNIGSNLMKSSSSILLRN.

Belongs to the bacterial ribosomal protein bL21 family.

It is found in the mitochondrion. This is Large ribosomal subunit protein bL21m (mrpl21) from Dictyostelium discoideum (Social amoeba).